The primary structure comprises 248 residues: Murein peptide amidase A (248 aa).

In terms of domain architecture, Peptidase M14 spans 3–245; it reads RYYSNNQEIT…DAFIALLQHD (243 aa). Zn(2+) is bound by residues His-60, Glu-63, and His-168. The Proton donor/acceptor role is filled by Glu-221.

The protein belongs to the peptidase M14 family. As to quaternary structure, homodimer. Zn(2+) is required as a cofactor.

The protein resides in the cytoplasm. It carries out the reaction L-alanyl-gamma-D-glutamyl-meso-2,6-diaminopimelate + H2O = L-alanyl-D-glutamate + meso-2,6-diaminopimelate. It participates in cell wall degradation; peptidoglycan degradation. Involved in muropeptide degradation. Catalyzes the hydrolysis of the gamma-D-glutamyl-diaminopimelic acid (gamma-D-Glu-Dap) amide bond in the murein tripeptide L-alanyl-gamma-D-glutamyl-meso-diaminopimelic acid, leading to the formation of L-Ala-gamma-D-Glu and Dap. Has weak activity with L-Ala-gamma-D-Glu-L-Lys, MurNAc-tripeptide and gamma-D-Glu-meso-Dap. Cannot hydrolyze murein tetrapeptide. This Vibrio campbellii (strain ATCC BAA-1116) protein is Murein peptide amidase A.